Reading from the N-terminus, the 424-residue chain is Serine--tRNA ligase (424 aa).

231–233 is a binding site for L-serine; that stretch reads TAE. 262-264 is an ATP binding site; the sequence is RSE. E285 contacts L-serine. 349-352 lines the ATP pocket; it reads EISS. S385 serves as a coordination point for L-serine.

Belongs to the class-II aminoacyl-tRNA synthetase family. Type-1 seryl-tRNA synthetase subfamily. As to quaternary structure, homodimer. The tRNA molecule binds across the dimer.

Its subcellular location is the cytoplasm. The catalysed reaction is tRNA(Ser) + L-serine + ATP = L-seryl-tRNA(Ser) + AMP + diphosphate + H(+). It carries out the reaction tRNA(Sec) + L-serine + ATP = L-seryl-tRNA(Sec) + AMP + diphosphate + H(+). It participates in aminoacyl-tRNA biosynthesis; selenocysteinyl-tRNA(Sec) biosynthesis; L-seryl-tRNA(Sec) from L-serine and tRNA(Sec): step 1/1. Functionally, catalyzes the attachment of serine to tRNA(Ser). Is also able to aminoacylate tRNA(Sec) with serine, to form the misacylated tRNA L-seryl-tRNA(Sec), which will be further converted into selenocysteinyl-tRNA(Sec). The polypeptide is Serine--tRNA ligase (Bacillus cereus (strain B4264)).